The following is a 231-amino-acid chain: Lipoprotein-releasing system ATP-binding protein LolD (231 aa).

Positions L6–L231 constitute an ABC transporter domain. G42 to S49 is a binding site for ATP.

Belongs to the ABC transporter superfamily. Lipoprotein translocase (TC 3.A.1.125) family. The complex is composed of two ATP-binding proteins (LolD) and two transmembrane proteins (LolC and LolE).

The protein localises to the cell inner membrane. In terms of biological role, part of the ABC transporter complex LolCDE involved in the translocation of mature outer membrane-directed lipoproteins, from the inner membrane to the periplasmic chaperone, LolA. Responsible for the formation of the LolA-lipoprotein complex in an ATP-dependent manner. In Hahella chejuensis (strain KCTC 2396), this protein is Lipoprotein-releasing system ATP-binding protein LolD.